Consider the following 247-residue polypeptide: 2,3-bisphosphoglycerate-dependent phosphoglycerate mutase (247 aa).

Substrate-binding positions include 8-15, 21-22, Arg-60, 87-90, Lys-98, 114-115, and 183-184; these read RHGESQWN, TG, ERHY, RR, and GN. His-9 functions as the Tele-phosphohistidine intermediate in the catalytic mechanism. Glu-87 acts as the Proton donor/acceptor in catalysis.

The protein belongs to the phosphoglycerate mutase family. BPG-dependent PGAM subfamily.

It carries out the reaction (2R)-2-phosphoglycerate = (2R)-3-phosphoglycerate. Its pathway is carbohydrate degradation; glycolysis; pyruvate from D-glyceraldehyde 3-phosphate: step 3/5. Its function is as follows. Catalyzes the interconversion of 2-phosphoglycerate and 3-phosphoglycerate. The protein is 2,3-bisphosphoglycerate-dependent phosphoglycerate mutase of Chlorobium phaeovibrioides (strain DSM 265 / 1930) (Prosthecochloris vibrioformis (strain DSM 265)).